The following is a 172-amino-acid chain: Shikimate kinase (172 aa).

Residue 8–15 (GARASGKT) participates in ATP binding.

This sequence belongs to the shikimate kinase family.

Its subcellular location is the cytoplasm. It catalyses the reaction shikimate + ATP = 3-phosphoshikimate + ADP + H(+). The protein operates within metabolic intermediate biosynthesis; chorismate biosynthesis; chorismate from D-erythrose 4-phosphate and phosphoenolpyruvate: step 5/7. In Oleidesulfovibrio alaskensis (strain ATCC BAA-1058 / DSM 17464 / G20) (Desulfovibrio alaskensis), this protein is Shikimate kinase.